The following is a 106-amino-acid chain: UPF0473 protein LSEI_0788 (106 aa).

It belongs to the UPF0473 family.

The protein is UPF0473 protein LSEI_0788 of Lacticaseibacillus paracasei (strain ATCC 334 / BCRC 17002 / CCUG 31169 / CIP 107868 / KCTC 3260 / NRRL B-441) (Lactobacillus paracasei).